Consider the following 416-residue polypeptide: Gamma-glutamyl phosphate reductase (416 aa).

The protein belongs to the gamma-glutamyl phosphate reductase family.

The protein resides in the cytoplasm. It catalyses the reaction L-glutamate 5-semialdehyde + phosphate + NADP(+) = L-glutamyl 5-phosphate + NADPH + H(+). It participates in amino-acid biosynthesis; L-proline biosynthesis; L-glutamate 5-semialdehyde from L-glutamate: step 2/2. Catalyzes the NADPH-dependent reduction of L-glutamate 5-phosphate into L-glutamate 5-semialdehyde and phosphate. The product spontaneously undergoes cyclization to form 1-pyrroline-5-carboxylate. The protein is Gamma-glutamyl phosphate reductase of Salmonella heidelberg (strain SL476).